A 402-amino-acid polypeptide reads, in one-letter code: MSLYLKAEKIQSWRVLIMACAGFIFNTTEFVPVAMLSDIAQSFDMQTADTGLMMTVYAWTVLIMSLPAMLATGNMERKSLLIKLFIIFIVGHILLVIAWNFWILLLARMCIALAHSVFWSITASLVMRISPKHKKTQALGMLAIGTALATILGLPIGRIVGQLVGWRVTFGIIAVLALSIMFLIIRLLPNLPSKNAGSIASLPLLAKRPLLLWLYVTTAIVISAHFTAYTYIEPFMIDVGHLDPNFATAVLLVFGFSGIAASLLFNRLYRFAPTKFIVVSMSLLMFSLLLLLFSTEAIIAMFSLVFIWGIGISCIGLSLQMRVLKLAPDATDVATAIYSGIFNAGIGAGALFGNLATTYLGLNEIGYTGAALGLIGFIIFITTHLKYRHTFLLQNNKKITAL.

A run of 12 helical transmembrane segments spans residues 15 to 35 (VLIM…PVAM), 51 to 71 (GLMM…AMLA), 84 to 104 (LFII…FWIL), 109 to 129 (MCIA…VMRI), 137 to 157 (QALG…LPIG), 168 to 188 (VTFG…IRLL), 209 to 229 (PLLL…FTAY), 245 to 265 (NFAT…SLLF), 276 to 296 (FIVV…FSTE), 297 to 317 (AIIA…CIGL), 333 to 353 (VATA…ALFG), and 365 to 385 (IGYT…TTHL).

Belongs to the major facilitator superfamily. SotB (TC 2.A.1.2) family.

Its subcellular location is the cell inner membrane. Its function is as follows. Involved in the efflux of sugars. The physiological role may be the reduction of the intracellular concentration of toxic sugars or sugar metabolites. This is Probable sugar efflux transporter from Haemophilus influenzae (strain 86-028NP).